The chain runs to 375 residues: Proton-coupled zinc antiporter SLC30A8 (375 aa).

The Cytoplasmic portion of the chain corresponds to 1–68 (MKGPEKAYLV…QREQTSAKKK (68 aa)). Zn(2+) is bound by residues H46, C47, and H48. An HCH Motif; seals regulatory zinc-binding pocket motif is present at residues 46-48 (HCH). A helical membrane pass occupies residues 69 to 89 (LCIASLICFVFISAEIVGGYI). Residues 90–98 (AGSLAVVTD) lie on the Lumenal, vesicle side of the membrane. A helical transmembrane segment spans residues 99-119 (AAHLLVDLSSFFISLGSLWLS). Zn(2+) is bound by residues H101 and D105. At 120 to 135 (SKSSTMRLTFGWYRAE) the chain is on the cytoplasmic side. A helical membrane pass occupies residues 136–156 (ILGALMSIITIWLVTGVLVYL). At 157–170 (AIERIIRPDYTIDG) the chain is on the lumenal, vesicle side. A helical transmembrane segment spans residues 171-191 (TVMLITSACALGANVVLALIL). Residues 192–223 (HQSGHGHSHAGGKHEHMASEYKPQTNASIRAA) are Cytoplasmic-facing. Residues 224–244 (FIHVIGDLFQSISVLISALII) form a helical membrane-spanning segment. Zn(2+)-binding residues include H226 and D230. Residues 245–251 (YFKPEYK) are Lumenal, vesicle-facing. A helical transmembrane segment spans residues 252 to 272 (IADPICTFIFSIFVLITTVTV). Residues 273-375 (LRDLLNILME…ECMFCYEPTQ (103 aa)) are Cytoplasmic-facing. Zn(2+) contacts are provided by H307, H324, H351, E358, C367, and C370.

This sequence belongs to the cation diffusion facilitator (CDF) transporter (TC 2.A.4) family. SLC30A subfamily. As to quaternary structure, homodimer.

The protein localises to the cytoplasmic vesicle. Its subcellular location is the secretory vesicle membrane. It localises to the cell membrane. The enzyme catalyses Zn(2+)(in) + 2 H(+)(out) = Zn(2+)(out) + 2 H(+)(in). Proton-coupled zinc ion antiporter mediating the entry of zinc into the lumen of pancreatic beta cell secretory granules, thereby regulating insulin secretion. The chain is Proton-coupled zinc antiporter SLC30A8 (slc30a8) from Xenopus laevis (African clawed frog).